The primary structure comprises 387 residues: MSDQSPLALAHALIRCPSVTPEEGGALSFLAERLTEAGFSVERPVFSEAGTPDIENLYARIGTAGPVLVFAGHTDVVPPGEAASWTHGPFSGEITDGFLYGRGAVDMKGGIACMLAATLSFLDRHGPDFGGSIAFLITGDEEGPAVNGTVKLLDWAKARGERFDHCLLGEPTNPDSLGEMIKIGRRGSLTGRITVHGRQGHVAYPHRAENPIPGLLRLASALIAEPLDGGTAHFDASNLEFTTIDVGNPATNVIPASAKAVFNVRFNDDWTAETLGAEIRKRLEAAAGNAVRFSLDLQPSNSPAFLTQPDAFVDLVADAIAAETGRRPALSTTGGTSDARFIKDACPVIEFGLVGRTMHETDERVAVADLDRLTAIYGRVLERYFSS.

His-73 provides a ligand contact to Zn(2+). Asp-75 is a catalytic residue. Asp-106 is a binding site for Zn(2+). Glu-141 serves as the catalytic Proton acceptor. Residues Glu-142, Glu-170, and His-359 each contribute to the Zn(2+) site.

This sequence belongs to the peptidase M20A family. DapE subfamily. Homodimer. Zn(2+) serves as cofactor. The cofactor is Co(2+).

The catalysed reaction is N-succinyl-(2S,6S)-2,6-diaminopimelate + H2O = (2S,6S)-2,6-diaminopimelate + succinate. It participates in amino-acid biosynthesis; L-lysine biosynthesis via DAP pathway; LL-2,6-diaminopimelate from (S)-tetrahydrodipicolinate (succinylase route): step 3/3. Catalyzes the hydrolysis of N-succinyl-L,L-diaminopimelic acid (SDAP), forming succinate and LL-2,6-diaminopimelate (DAP), an intermediate involved in the bacterial biosynthesis of lysine and meso-diaminopimelic acid, an essential component of bacterial cell walls. In Methylorubrum populi (strain ATCC BAA-705 / NCIMB 13946 / BJ001) (Methylobacterium populi), this protein is Succinyl-diaminopimelate desuccinylase.